We begin with the raw amino-acid sequence, 491 residues long: Galactose-1-phosphate uridylyltransferase 1 (491 aa).

It belongs to the galactose-1-phosphate uridylyltransferase type 2 family.

It localises to the cytoplasm. It catalyses the reaction alpha-D-galactose 1-phosphate + UDP-alpha-D-glucose = alpha-D-glucose 1-phosphate + UDP-alpha-D-galactose. Its pathway is carbohydrate metabolism; galactose metabolism. This Streptococcus pneumoniae serotype 4 (strain ATCC BAA-334 / TIGR4) protein is Galactose-1-phosphate uridylyltransferase 1 (galT1).